We begin with the raw amino-acid sequence, 84 residues long: Small ribosomal subunit protein eS27-like (84 aa).

The segment covering 1 to 16 (MPLARDLLHPSLEEEK) has biased composition (basic and acidic residues). The disordered stretch occupies residues 1 to 23 (MPLARDLLHPSLEEEKKKHKKKR). Residues 38 to 60 (PGCYKITTVFSHAQTVVLCVGCS) form a C4-type zinc finger.

It belongs to the eukaryotic ribosomal protein eS27 family. Zn(2+) is required as a cofactor.

The polypeptide is Small ribosomal subunit protein eS27-like (Mus musculus (Mouse)).